We begin with the raw amino-acid sequence, 336 residues long: UDP-N-acetylenolpyruvoylglucosamine reductase (336 aa).

Residues 17–188 (LRSLAERFVE…WDVTFRLPKK (172 aa)) form the FAD-binding PCMH-type domain. Arg164 is an active-site residue. The Proton donor role is filled by Ser237. Residue Glu332 is part of the active site.

It belongs to the MurB family. FAD is required as a cofactor.

It is found in the cytoplasm. It catalyses the reaction UDP-N-acetyl-alpha-D-muramate + NADP(+) = UDP-N-acetyl-3-O-(1-carboxyvinyl)-alpha-D-glucosamine + NADPH + H(+). It participates in cell wall biogenesis; peptidoglycan biosynthesis. In terms of biological role, cell wall formation. The protein is UDP-N-acetylenolpyruvoylglucosamine reductase of Bdellovibrio bacteriovorus (strain ATCC 15356 / DSM 50701 / NCIMB 9529 / HD100).